The primary structure comprises 269 residues: GTP cyclohydrolase FolE2 1 (269 aa).

This sequence belongs to the GTP cyclohydrolase IV family.

It carries out the reaction GTP + H2O = 7,8-dihydroneopterin 3'-triphosphate + formate + H(+). It participates in cofactor biosynthesis; 7,8-dihydroneopterin triphosphate biosynthesis; 7,8-dihydroneopterin triphosphate from GTP: step 1/1. Its function is as follows. Converts GTP to 7,8-dihydroneopterin triphosphate. The protein is GTP cyclohydrolase FolE2 1 of Burkholderia cenocepacia (strain HI2424).